The following is a 399-amino-acid chain: Methylthioribose kinase (399 aa).

ATP is bound by residues Asn-40, Lys-57, and 111-113 (EDL). Asp-229 is a binding site for substrate. 246-248 (DAE) contributes to the ATP binding site. Residue Arg-344 coordinates substrate.

It belongs to the methylthioribose kinase family. Homodimer.

It catalyses the reaction 5-(methylsulfanyl)-D-ribose + ATP = 5-(methylsulfanyl)-alpha-D-ribose 1-phosphate + ADP + H(+). The protein operates within amino-acid biosynthesis; L-methionine biosynthesis via salvage pathway; S-methyl-5-thio-alpha-D-ribose 1-phosphate from S-methyl-5'-thioadenosine (hydrolase route): step 2/2. In terms of biological role, catalyzes the phosphorylation of methylthioribose into methylthioribose-1-phosphate. In Yersinia enterocolitica serotype O:8 / biotype 1B (strain NCTC 13174 / 8081), this protein is Methylthioribose kinase.